The sequence spans 373 residues: Gametogenetin-binding protein 1 (373 aa).

Disordered regions lie at residues 26 to 113 (VGSK…GSQT) and 237 to 268 (KAQR…AVDE). Over residues 36–49 (NRPLNRSQPSSSPE) the composition is skewed to polar residues. The segment at 226-373 (LYKQLQKSAM…DEMGNWPPPE (148 aa)) is required for induction of mitochondrial fragmentation. Over residues 254 to 263 (SPTEERGERE) the composition is skewed to basic and acidic residues. The interaction with GGN stretch occupies residues 301–373 (KTFRSTDTVG…DEMGNWPPPE (73 aa)).

In terms of assembly, interacts with CCDC159. Interacts with GGN.

It is found in the cytoplasm. The protein localises to the membrane. The protein resides in the golgi apparatus. Its subcellular location is the mitochondrion intermembrane space. In terms of biological role, induces mitochondrial fragmentation, possibly by promoting DNM1L-dependent fission and may play a role in mitochondrial morphogenesis during spermatogenesis. The protein is Gametogenetin-binding protein 1 (Ggnbp1) of Rattus norvegicus (Rat).